The chain runs to 1373 residues: DNA-directed RNA polymerase subunit beta (1373 aa).

Belongs to the RNA polymerase beta chain family. The RNAP catalytic core consists of 2 alpha, 1 beta, 1 beta' and 1 omega subunit. When a sigma factor is associated with the core the holoenzyme is formed, which can initiate transcription.

It carries out the reaction RNA(n) + a ribonucleoside 5'-triphosphate = RNA(n+1) + diphosphate. Functionally, DNA-dependent RNA polymerase catalyzes the transcription of DNA into RNA using the four ribonucleoside triphosphates as substrates. This Rickettsia massiliae (strain Mtu5) protein is DNA-directed RNA polymerase subunit beta.